A 199-amino-acid polypeptide reads, in one-letter code: Recombination protein RecR (199 aa).

The segment at 58–73 (CKKCFNLTSEDECEIC) adopts a C4-type zinc-finger fold. One can recognise a Toprim domain in the interval 81 to 175 (KLICVVAETK…KVTRIAYGLP (95 aa)).

The protein belongs to the RecR family.

May play a role in DNA repair. It seems to be involved in an RecBC-independent recombinational process of DNA repair. It may act with RecF and RecO. This is Recombination protein RecR from Prochlorococcus marinus (strain MIT 9301).